Here is a 146-residue protein sequence, read N- to C-terminus: Ribonuclease H (146 aa).

An RNase H type-1 domain is found at 4-145 (ELNKVVIYTD…ADILARSQIS (142 aa)). Positions 13, 51, 73, and 137 each coordinate Mg(2+).

It belongs to the RNase H family. As to quaternary structure, monomer. Mg(2+) is required as a cofactor.

The protein localises to the cytoplasm. It catalyses the reaction Endonucleolytic cleavage to 5'-phosphomonoester.. Functionally, endonuclease that specifically degrades the RNA of RNA-DNA hybrids. This chain is Ribonuclease H, found in Ehrlichia canis (strain Jake).